The chain runs to 128 residues: Holo-[acyl-carrier-protein] synthase (128 aa).

2 residues coordinate Mg(2+): Asp-8 and Glu-58.

The protein belongs to the P-Pant transferase superfamily. AcpS family. Requires Mg(2+) as cofactor.

The protein localises to the cytoplasm. The catalysed reaction is apo-[ACP] + CoA = holo-[ACP] + adenosine 3',5'-bisphosphate + H(+). Functionally, transfers the 4'-phosphopantetheine moiety from coenzyme A to a Ser of acyl-carrier-protein. The polypeptide is Holo-[acyl-carrier-protein] synthase (Exiguobacterium sibiricum (strain DSM 17290 / CCUG 55495 / CIP 109462 / JCM 13490 / 255-15)).